Consider the following 381-residue polypeptide: Glycerate kinase (381 aa).

The protein belongs to the glycerate kinase type-1 family.

The catalysed reaction is (R)-glycerate + ATP = (2R)-3-phosphoglycerate + ADP + H(+). The polypeptide is Glycerate kinase (glxK) (Bacillus cereus (strain ATCC 10987 / NRS 248)).